The sequence spans 329 residues: Phenylalanine--tRNA ligase alpha subunit (329 aa).

Residue E253 coordinates Mg(2+).

It belongs to the class-II aminoacyl-tRNA synthetase family. Phe-tRNA synthetase alpha subunit type 1 subfamily. Tetramer of two alpha and two beta subunits. Requires Mg(2+) as cofactor.

It localises to the cytoplasm. It carries out the reaction tRNA(Phe) + L-phenylalanine + ATP = L-phenylalanyl-tRNA(Phe) + AMP + diphosphate + H(+). The sequence is that of Phenylalanine--tRNA ligase alpha subunit from Coxiella burnetii (strain CbuK_Q154) (Coxiella burnetii (strain Q154)).